We begin with the raw amino-acid sequence, 292 residues long: Tissue factor (292 aa).

A signal peptide spans 1–32; the sequence is MAPPTRLQVPRPGTAVPYTVLLGWLLAQVARA. Residues 33 to 250 are Extracellular-facing; that stretch reads ADTTGRAYNL…SREQGRAREM (218 aa). Fibronectin type-III domains lie at 35-126 and 148-240; these read TTGR…PFRN and QVGT…TECT. An N-linked (GlcNAc...) asparagine glycan is attached at N41. Short sequence motifs (WKS motif) lie at residues 44–46 and 75–77; these read WKS. A disulfide bridge links C79 with C87. N114, N154, N167, and N182 each carry an N-linked (GlcNAc...) asparagine glycan. A disulfide bridge links C216 with C239. The helical transmembrane segment at 251-271 threads the bilayer; sequence FFIIGAVVVVALLIIVLSVTV. At 272–292 the chain is on the cytoplasmic side; the sequence is YKCRKARAGPSGKESSPLNIA. C274 is lipidated: S-palmitoyl cysteine.

It belongs to the tissue factor family. As to quaternary structure, interacts with HSPE; the interaction, inhibited by heparin, promotes the generation of activated factor X and activates coagulation in the presence of activated factor VII. In terms of tissue distribution, brain, heart.

Its subcellular location is the membrane. Its function is as follows. Initiates blood coagulation by forming a complex with circulating factor VII or VIIa. The [TF:VIIa] complex activates factors IX or X by specific limited proteolysis. TF plays a role in normal hemostasis by initiating the cell-surface assembly and propagation of the coagulation protease cascade. The polypeptide is Tissue factor (F3) (Oryctolagus cuniculus (Rabbit)).